We begin with the raw amino-acid sequence, 299 residues long: MLPADQAGIPPCQGPRARSAPISFAIPKGAWDTHLHVFGPTAVFPYAEKRPYTPPDSPLEDYLALMERLGIERGVCVHPNVHGIDNSVTIDAVERSDRRLLGIIKPHRVMTFTELRDLKTRGVRGVRFAFNPQHGSGALDTELFERMHGWCRELDWCINMHFAPDALEGLCDLIAGAETPIIIDHFGRVETAAGVNQLPFKILRDLATLDHVWIKLTGADRISHSGVPYDDVVPFAHALSEIAPDRLLWGSDWPHSGYFDPKRMPDDGDLLNLVARFAPDVALRHKILVDNPARLFGVI.

This sequence belongs to the metallo-dependent hydrolases superfamily. Sulfomuconolactone hydrolase family. Monomer. Requires Zn(2+) as cofactor.

The catalysed reaction is 4-sulfomuconolactone + H2O = maleylacetate + sulfite + 2 H(+). Functionally, involved in the degradation of 4-sulfocatechol which is a central intermediate in the degradation of substituted sulfonated benzenes. Catalyzes the hydrolytical desulfonation of 4-sulfomuconolactone to yield maleylacetate. In Rhizobium radiobacter (Agrobacterium tumefaciens), this protein is 4-sulfomuconolactone hydrolase.